A 204-amino-acid polypeptide reads, in one-letter code: Prephenate decarboxylase (204 aa).

This sequence belongs to the prephenate decarboxylase family.

The protein localises to the cytoplasm. The enzyme catalyses prephenate + H(+) = 3-[(4R)-4-hydroxycyclohexa-1,5-dien-1-yl]-2-oxopropanoate + CO2. The protein operates within antibiotic biosynthesis; bacilysin biosynthesis. Its function is as follows. Part of the bacABCDEF operon responsible for the biosynthesis of the nonribosomally synthesized dipeptide antibiotic bacilysin, composed of L-alanine and L-anticapsin. Bacilysin is an irreversible inactivator of the glutaminase domain of glucosamine synthetase. BacA is an unusual prephenate decarboxylase that avoids the typical aromatization of the cyclohexadienol ring of prephenate. BacA catalyzes the protonation of prephenate (1-carboxy-4-hydroxy-alpha-oxo-2,5-cyclohexadiene-1-propanoic acid) at C6 position, followed by a decarboxylation to produce the endocyclic-delta(4),delta(8)-7R-dihydro-hydroxyphenylpyruvate (en-H2HPP). En-H2HPP is able to undergo a slow nonenzymatic isomerization to produce the exocyclic-delta(3),delta(5)-dihydro-hydroxyphenylpyruvate (ex-H2HPP). BacA isomerizes only the pro-R double bond in prephenate. The polypeptide is Prephenate decarboxylase (Bacillus amyloliquefaciens (Bacillus velezensis)).